The primary structure comprises 309 residues: Protein-L-isoaspartate O-methyltransferase 2 (309 aa).

The Nuclear localization signal signature appears at 23-28 (KKRKKK). S144 is an active-site residue.

Belongs to the methyltransferase superfamily. L-isoaspartyl/D-aspartyl protein methyltransferase family. As to expression, expressed in rosette leaves, stems, cauline leaves, flowers and developing seeds.

It is found in the nucleus. The enzyme catalyses [protein]-L-isoaspartate + S-adenosyl-L-methionine = [protein]-L-isoaspartate alpha-methyl ester + S-adenosyl-L-homocysteine. Functionally, catalyzes the methyl esterification of L-isoaspartyl residues in peptides and proteins that result from spontaneous decomposition of normal L-aspartyl and L-asparaginyl residues. It plays a role in the repair and/or degradation of damaged proteins. The polypeptide is Protein-L-isoaspartate O-methyltransferase 2 (PIMT2) (Arabidopsis thaliana (Mouse-ear cress)).